Consider the following 132-residue polypeptide: Small ribosomal subunit protein uS13 (132 aa).

Residues 101–125 (RGLPVRGQRTKTNARTRKGPRKTVA) are compositionally biased toward basic residues. The tract at residues 101–132 (RGLPVRGQRTKTNARTRKGPRKTVANKKIETR) is disordered.

Belongs to the universal ribosomal protein uS13 family. As to quaternary structure, part of the 30S ribosomal subunit. Forms a loose heterodimer with protein S19. Forms two bridges to the 50S subunit in the 70S ribosome.

Functionally, located at the top of the head of the 30S subunit, it contacts several helices of the 16S rRNA. In the 70S ribosome it contacts the 23S rRNA (bridge B1a) and protein L5 of the 50S subunit (bridge B1b), connecting the 2 subunits; these bridges are implicated in subunit movement. Contacts the tRNAs in the A and P-sites. This Ureaplasma parvum serovar 3 (strain ATCC 27815 / 27 / NCTC 11736) protein is Small ribosomal subunit protein uS13.